The following is a 140-amino-acid chain: Small ribosomal subunit protein uS12 (140 aa).

Disordered regions lie at residues 1–20 (MPTI…VKSD) and 35–55 (QTNV…TMTP). 3-methylthioaspartic acid is present on aspartate 102. The disordered stretch occupies residues 121–140 (DGRMQGRSKYGTKRPKAAKK). The span at 130–140 (YGTKRPKAAKK) shows a compositional bias: basic residues.

This sequence belongs to the universal ribosomal protein uS12 family. In terms of assembly, part of the 30S ribosomal subunit. Contacts proteins S8 and S17. May interact with IF1 in the 30S initiation complex.

With S4 and S5 plays an important role in translational accuracy. Functionally, interacts with and stabilizes bases of the 16S rRNA that are involved in tRNA selection in the A site and with the mRNA backbone. Located at the interface of the 30S and 50S subunits, it traverses the body of the 30S subunit contacting proteins on the other side and probably holding the rRNA structure together. The combined cluster of proteins S8, S12 and S17 appears to hold together the shoulder and platform of the 30S subunit. The protein is Small ribosomal subunit protein uS12 of Exiguobacterium sp. (strain ATCC BAA-1283 / AT1b).